A 269-amino-acid chain; its full sequence is Formamidopyrimidine-DNA glycosylase (269 aa).

Pro2 (schiff-base intermediate with DNA) is an active-site residue. Residue Glu3 is the Proton donor of the active site. Catalysis depends on Lys57, which acts as the Proton donor; for beta-elimination activity. DNA contacts are provided by His90, Arg109, and Lys150. An FPG-type zinc finger spans residues 235–269 (QVYGRHGEPCYTCGEFIQIAKYGQRSSFFCPSCQN). Arg259 functions as the Proton donor; for delta-elimination activity in the catalytic mechanism.

Belongs to the FPG family. Monomer. The cofactor is Zn(2+).

The catalysed reaction is Hydrolysis of DNA containing ring-opened 7-methylguanine residues, releasing 2,6-diamino-4-hydroxy-5-(N-methyl)formamidopyrimidine.. It carries out the reaction 2'-deoxyribonucleotide-(2'-deoxyribose 5'-phosphate)-2'-deoxyribonucleotide-DNA = a 3'-end 2'-deoxyribonucleotide-(2,3-dehydro-2,3-deoxyribose 5'-phosphate)-DNA + a 5'-end 5'-phospho-2'-deoxyribonucleoside-DNA + H(+). Functionally, involved in base excision repair of DNA damaged by oxidation or by mutagenic agents. Acts as a DNA glycosylase that recognizes and removes damaged bases. Has a preference for oxidized purines, such as 7,8-dihydro-8-oxoguanine (8-oxoG). Has AP (apurinic/apyrimidinic) lyase activity and introduces nicks in the DNA strand. Cleaves the DNA backbone by beta-delta elimination to generate a single-strand break at the site of the removed base with both 3'- and 5'-phosphates. The protein is Formamidopyrimidine-DNA glycosylase of Baumannia cicadellinicola subsp. Homalodisca coagulata.